A 103-amino-acid chain; its full sequence is Small ribosomal subunit protein uS10 (103 aa).

It belongs to the universal ribosomal protein uS10 family. Part of the 30S ribosomal subunit.

Functionally, involved in the binding of tRNA to the ribosomes. The chain is Small ribosomal subunit protein uS10 from Borrelia recurrentis (strain A1).